The chain runs to 154 residues: Myoglobin (154 aa).

Positions 2–148 (GLSDGEWELV…FRNDIAAKYK (147 aa)) constitute a Globin domain. Phosphoserine is present on Ser4. At Thr68 the chain carries Phosphothreonine. His94 serves as a coordination point for heme b.

It belongs to the globin family. Monomeric.

It is found in the cytoplasm. The protein localises to the sarcoplasm. It catalyses the reaction Fe(III)-heme b-[protein] + nitric oxide + H2O = Fe(II)-heme b-[protein] + nitrite + 2 H(+). The enzyme catalyses H2O2 + AH2 = A + 2 H2O. In terms of biological role, monomeric heme protein which primary function is to store oxygen and facilitate its diffusion within muscle tissues. Reversibly binds oxygen through a pentacoordinated heme iron and enables its timely and efficient release as needed during periods of heightened demand. Depending on the oxidative conditions of tissues and cells, and in addition to its ability to bind oxygen, it also has a nitrite reductase activity whereby it regulates the production of bioactive nitric oxide. Under stress conditions, like hypoxia and anoxia, it also protects cells against reactive oxygen species thanks to its pseudoperoxidase activity. The polypeptide is Myoglobin (MB) (Loxodonta africana (African elephant)).